We begin with the raw amino-acid sequence, 99 residues long: Putative protein adenylyltransferase MJ0141 (99 aa).

Positions G29–D43 match the GSX(10)DXD motif motif. The Mg(2+) site is built by D41 and D43.

Belongs to the MntA antitoxin family. Mg(2+) is required as a cofactor.

The catalysed reaction is L-tyrosyl-[protein] + ATP = O-(5'-adenylyl)-L-tyrosyl-[protein] + diphosphate. The enzyme catalyses O-(5'-adenylyl)-L-tyrosyl-[protein] + ATP = O-[5'-(adenylyl-(5'-&gt;3')-adenylyl)]-L-tyrosyl-[protein] + diphosphate. Putative antitoxin component of a putative type VII toxin-antitoxin (TA) system. Its cognate toxin might be MF0142, which it might AMPylate. The protein is Putative protein adenylyltransferase MJ0141 of Methanocaldococcus jannaschii (strain ATCC 43067 / DSM 2661 / JAL-1 / JCM 10045 / NBRC 100440) (Methanococcus jannaschii).